The chain runs to 570 residues: Proline--tRNA ligase (570 aa).

It belongs to the class-II aminoacyl-tRNA synthetase family. ProS type 1 subfamily. As to quaternary structure, homodimer.

The protein localises to the cytoplasm. It carries out the reaction tRNA(Pro) + L-proline + ATP = L-prolyl-tRNA(Pro) + AMP + diphosphate. Its function is as follows. Catalyzes the attachment of proline to tRNA(Pro) in a two-step reaction: proline is first activated by ATP to form Pro-AMP and then transferred to the acceptor end of tRNA(Pro). As ProRS can inadvertently accommodate and process non-cognate amino acids such as alanine and cysteine, to avoid such errors it has two additional distinct editing activities against alanine. One activity is designated as 'pretransfer' editing and involves the tRNA(Pro)-independent hydrolysis of activated Ala-AMP. The other activity is designated 'posttransfer' editing and involves deacylation of mischarged Ala-tRNA(Pro). The misacylated Cys-tRNA(Pro) is not edited by ProRS. The sequence is that of Proline--tRNA ligase from Thermoanaerobacter sp. (strain X514).